Consider the following 211-residue polypeptide: MTGQTPLLEAKNLQCERDDRILFENLSFSVHSGDVVQIEGPNGAGKTTLLKLLCGLAPLRQGELFWRGERMSQARPQFLSSLLYLGHKTGVKALLTPLENLRAWCAQREDVNEERMMSALETVGLAGYEYSPCNSLSAGQQRRAALARLHVSSAPLWVLDEAFTAIDKKGVAQLETLLREKANGGGAVILTTHHSLHLSGEVRRIQLGAVS.

Residues 8–210 (LEAKNLQCER…EVRRIQLGAV (203 aa)) form the ABC transporter domain. 40–47 (GPNGAGKT) provides a ligand contact to ATP.

The protein belongs to the ABC transporter superfamily. CcmA exporter (TC 3.A.1.107) family. As to quaternary structure, the complex is composed of two ATP-binding proteins (CcmA) and two transmembrane proteins (CcmB).

The protein resides in the cell inner membrane. The enzyme catalyses heme b(in) + ATP + H2O = heme b(out) + ADP + phosphate + H(+). Its function is as follows. Part of the ABC transporter complex CcmAB involved in the biogenesis of c-type cytochromes; once thought to export heme, this seems not to be the case, but its exact role is uncertain. Responsible for energy coupling to the transport system. This Hahella chejuensis (strain KCTC 2396) protein is Cytochrome c biogenesis ATP-binding export protein CcmA.